Consider the following 132-residue polypeptide: ATP synthase epsilon chain (132 aa).

This sequence belongs to the ATPase epsilon chain family. F-type ATPases have 2 components, CF(1) - the catalytic core - and CF(0) - the membrane proton channel. CF(1) has five subunits: alpha(3), beta(3), gamma(1), delta(1), epsilon(1). CF(0) has three main subunits: a, b and c.

It localises to the cell inner membrane. Produces ATP from ADP in the presence of a proton gradient across the membrane. This is ATP synthase epsilon chain from Gloeobacter violaceus (strain ATCC 29082 / PCC 7421).